Here is a 173-residue protein sequence, read N- to C-terminus: HTH-type transcriptional regulator IscR (173 aa).

The HTH rrf2-type domain maps to 2–131 (KLTSKGRYAV…NDITLGELMK (130 aa)). The H-T-H motif DNA-binding region spans 28–51 (LADISERQGISLSYLEQLFSKLRK). 3 residues coordinate [2Fe-2S] cluster: cysteine 92, cysteine 98, and cysteine 104.

[2Fe-2S] cluster serves as cofactor.

Regulates the transcription of several operons and genes involved in the biogenesis of Fe-S clusters and Fe-S-containing proteins. In Vibrio atlanticus (strain LGP32) (Vibrio splendidus (strain Mel32)), this protein is HTH-type transcriptional regulator IscR.